Consider the following 369-residue polypeptide: Gap junction alpha-5 protein (369 aa).

Residues 2 to 19 (GDWSFLGEFLEEVHKHST) are Cytoplasmic-facing. A helical membrane pass occupies residues 20-40 (VVGKVWLTVLFIFRMLVLGTA). At 41–76 (AGPLWGDEQSDFMCDTQQPGCENVCYDKAFPISHVR) the chain is on the extracellular side. The helical transmembrane segment at 77 to 97 (FWVLQIIFVSTPSLVYMGHAM) threads the bilayer. Residues 98 to 169 (HTVRMEEKRK…YSILIRTAME (72 aa)) are Cytoplasmic-facing. A helical transmembrane segment spans residues 170 to 190 (IAFIVGQYILYGIFLETLYIC). Residues 191 to 210 (QRAPCPHPVNCYVSRPTEKN) are Extracellular-facing. The chain crosses the membrane as a helical span at residues 211 to 231 (VFIIFMLAVAVLSLFLSLAEL). Topologically, residues 232–369 (YHLGWKKAKE…SKARSDDLSV (138 aa)) are cytoplasmic. Positions 347–369 (NEKRRFSKASRASSKARSDDLSV) are disordered.

It belongs to the connexin family. Alpha-type (group II) subfamily. In terms of assembly, a connexon is composed of a hexamer of connexins. In terms of tissue distribution, mostly in heart, and in the whole embryo, liver, stomach, and pectoral muscle.

The protein localises to the cell membrane. The protein resides in the cell junction. It localises to the gap junction. In terms of biological role, one gap junction consists of a cluster of closely packed pairs of transmembrane channels, the connexons, through which materials of low MW diffuse from one cell to a neighboring cell. This is Gap junction alpha-5 protein (GJA5) from Gallus gallus (Chicken).